The following is a 280-amino-acid chain: Shikimate dehydrogenase (NADP(+)) (280 aa).

Shikimate contacts are provided by residues 15 to 17 (SLS) and threonine 62. The active-site Proton acceptor is lysine 66. Residues asparagine 88 and aspartate 104 each contribute to the shikimate site. NADP(+) is bound by residues 128-132 (GAGGA), 151-156 (NRTEER), and isoleucine 222. Tyrosine 224 lines the shikimate pocket. Glycine 245 is a binding site for NADP(+).

This sequence belongs to the shikimate dehydrogenase family. As to quaternary structure, homodimer.

The catalysed reaction is shikimate + NADP(+) = 3-dehydroshikimate + NADPH + H(+). It functions in the pathway metabolic intermediate biosynthesis; chorismate biosynthesis; chorismate from D-erythrose 4-phosphate and phosphoenolpyruvate: step 4/7. Functionally, involved in the biosynthesis of the chorismate, which leads to the biosynthesis of aromatic amino acids. Catalyzes the reversible NADPH linked reduction of 3-dehydroshikimate (DHSA) to yield shikimate (SA). This is Shikimate dehydrogenase (NADP(+)) from Methanosarcina acetivorans (strain ATCC 35395 / DSM 2834 / JCM 12185 / C2A).